Reading from the N-terminus, the 114-residue chain is PDZK1-interacting protein 1 (114 aa).

At 1–28 (MSALSLVILGLLMAVPPASCQQGLGNLQ) the chain is on the extracellular side. The helical transmembrane segment at 29 to 51 (PWMQGLIAVAVFLVLVAIAFAIN) threads the bilayer. Residues 52 to 114 (HFWCQEEREP…EEGRVHSTPM (63 aa)) lie on the Cytoplasmic side of the membrane. A Phosphoserine modification is found at S85. Residues 92-114 (SNEHENAYENTSEEEGRVHSTPM) form a disordered region. Basic and acidic residues predominate over residues 105 to 114 (EEGRVHSTPM).

Belongs to the PDZK1-interacting protein 1/SMIM24 family. Forms a heterodimer (via N-terminal transmembrane helix) with SLC5A2/SGLT2 (via TM13); this interaction enhances SLC5A2 transporter activity. Interacts with PDZK1.

Its subcellular location is the apical cell membrane. Its function is as follows. Auxiliary protein of electrogenic Na(+)-coupled sugar symporter SLC5A2/SGLT2 and SLC5A1/SGLT1. Essential for the transporter activity of SLC5A2/SGLT2 but not SLC5A1/SGLT1. This Sus scrofa (Pig) protein is PDZK1-interacting protein 1.